A 360-amino-acid polypeptide reads, in one-letter code: Protein Wnt-2 (360 aa).

Positions 1–25 are cleaved as a signal peptide; the sequence is MNSPLRGIWLWLPLLLTWLTPEVSS. Disulfide bonds link C76-C87, C127-C135, C137-C157, C206-C220, C208-C215, C278-C309, C294-C304, C308-C348, C324-C339, C326-C336, and C331-C332. S212 carries O-palmitoleoyl serine; by PORCN lipidation. N-linked (GlcNAc...) asparagine glycosylation occurs at N295.

It belongs to the Wnt family. In terms of processing, palmitoleoylation is required for efficient binding to frizzled receptors. Depalmitoleoylation leads to Wnt signaling pathway inhibition.

It is found in the secreted. It localises to the extracellular space. The protein resides in the extracellular matrix. Its function is as follows. Ligand for members of the frizzled family of seven transmembrane receptors. Probable developmental protein. May be a signaling molecule which affects the development of discrete regions of tissues. Is likely to signal over only few cell diameters. The polypeptide is Protein Wnt-2 (WNT2) (Ateles geoffroyi (Black-handed spider monkey)).